The sequence spans 416 residues: Serine hydroxymethyltransferase (416 aa).

(6S)-5,6,7,8-tetrahydrofolate contacts are provided by residues Leu121 and 125–127 (GHL). Lys229 is subject to N6-(pyridoxal phosphate)lysine.

Belongs to the SHMT family. As to quaternary structure, homodimer. The cofactor is pyridoxal 5'-phosphate.

The protein resides in the cytoplasm. It catalyses the reaction (6R)-5,10-methylene-5,6,7,8-tetrahydrofolate + glycine + H2O = (6S)-5,6,7,8-tetrahydrofolate + L-serine. The protein operates within one-carbon metabolism; tetrahydrofolate interconversion. Its pathway is amino-acid biosynthesis; glycine biosynthesis; glycine from L-serine: step 1/1. Catalyzes the reversible interconversion of serine and glycine with tetrahydrofolate (THF) serving as the one-carbon carrier. This reaction serves as the major source of one-carbon groups required for the biosynthesis of purines, thymidylate, methionine, and other important biomolecules. Also exhibits THF-independent aldolase activity toward beta-hydroxyamino acids, producing glycine and aldehydes, via a retro-aldol mechanism. The protein is Serine hydroxymethyltransferase of Neisseria gonorrhoeae (strain ATCC 700825 / FA 1090).